A 125-amino-acid chain; its full sequence is Large-conductance mechanosensitive channel (125 aa).

The next 3 membrane-spanning stretches (helical) occupy residues 19 to 39, 42 to 62, and 66 to 86; these read VGVIIGGAFTAIVNSLVKYII, FLGLFVGAIDFSDLVFKIGNA, and VGSFLNAVINFLIIAFVVFLM.

Belongs to the MscL family. Homopentamer.

The protein localises to the cell membrane. Channel that opens in response to stretch forces in the membrane lipid bilayer. May participate in the regulation of osmotic pressure changes within the cell. The sequence is that of Large-conductance mechanosensitive channel from Ligilactobacillus salivarius (strain UCC118) (Lactobacillus salivarius).